Consider the following 524-residue polypeptide: Capsid scaffolding protein (524 aa).

Residues His47, Ser116, and His137 each act as charge relay system in the active site. Residues 268–287 (DDLIPVPRSAFLNMLESTVS) are interaction with pAP. Residues 359 to 365 (RPRKRAR) carry the Nuclear localization signal motif. The tract at residues 359–378 (RPRKRAREDPEDEVSFPGEE) is disordered. The segment at 504–524 (AETSKAATLQKLFCDEMLSKQ) is interaction with major capsid protein.

Belongs to the herpesviridae capsid scaffolding protein family. In terms of assembly, homomultimer. Interacts with major capsid protein. Exists in a monomer-dimer equilibrium with the dimer being the active species. In terms of processing, capsid scaffolding protein is cleaved by assemblin after formation of the spherical procapsid. As a result, the capsid obtains its mature, icosahedral shape. Cleavages occur at two or more sites: release (R-site) and maturation (M-site).

The protein resides in the host cytoplasm. Its subcellular location is the host nucleus. It catalyses the reaction Cleaves -Ala-|-Ser- and -Ala-|-Ala- bonds in the scaffold protein.. Its function is as follows. Acts as a scaffold protein by binding major capsid protein in the cytoplasm, inducing the nuclear localization of both proteins. Multimerizes in the nucleus such as major capsid protein forms the icosahedral T=16 capsid. Autocatalytic cleavage releases the assembly protein, and subsequently abolishes interaction with major capsid protein. Cleavages products are evicted from the capsid before or during DNA packaging. Functionally, protease that plays an essential role in virion assembly within the nucleus. Catalyzes the cleavage of the assembly protein after formation of the spherical procapsid. By that cleavage, the capsid matures and gains its icosahedral shape. The cleavage sites seem to include -Ala-Ser-, -Ala-Ala-, as well as Ala-Thr bonds. Assemblin and cleavages products are evicted from the capsid before or during DNA packaging. Plays a major role in capsid assembly. Acts as a scaffold protein by binding major capsid protein. Multimerizes in the nucleus such as major capsid protein forms the icosahedral T=16 capsid. Cleaved by assemblin after capsid completion. The cleavages products are evicted from the capsid before or during DNA packaging. This is Capsid scaffolding protein (17) from Connochaetes taurinus (Blue wildebeest).